The primary structure comprises 579 residues: Glutamate--tRNA ligase (579 aa).

Residues 114–124 (PNPNGPWHIGH) carry the 'HIGH' region motif.

The protein belongs to the class-I aminoacyl-tRNA synthetase family. Glutamate--tRNA ligase type 2 subfamily.

It is found in the cytoplasm. It carries out the reaction tRNA(Glu) + L-glutamate + ATP = L-glutamyl-tRNA(Glu) + AMP + diphosphate. In terms of biological role, catalyzes the attachment of glutamate to tRNA(Glu) in a two-step reaction: glutamate is first activated by ATP to form Glu-AMP and then transferred to the acceptor end of tRNA(Glu). This is Glutamate--tRNA ligase from Haloarcula marismortui (strain ATCC 43049 / DSM 3752 / JCM 8966 / VKM B-1809) (Halobacterium marismortui).